Here is a 260-residue protein sequence, read N- to C-terminus: Adenosylcobinamide-GDP ribazoletransferase (260 aa).

The next 7 membrane-spanning stretches (helical) occupy residues 42–62 (PLAGGILGLLAGVALLIANAI), 64–84 (LPPLAAALIAIGALAAMTGAL), 117–137 (FAALTLVIWTSVKASLLMAII), 144–164 (YALLALIGTEAASRAGMLAFW), 192–212 (GLGLALLAIGFLPSGGMVALI), 214–234 (ALVLMTVVLFGFARLCMAKIG), and 240–260 (TLGAAQQIGSLAALIGLVMAL).

This sequence belongs to the CobS family. The cofactor is Mg(2+).

It is found in the cell inner membrane. The enzyme catalyses alpha-ribazole + adenosylcob(III)inamide-GDP = adenosylcob(III)alamin + GMP + H(+). It carries out the reaction alpha-ribazole 5'-phosphate + adenosylcob(III)inamide-GDP = adenosylcob(III)alamin 5'-phosphate + GMP + H(+). The protein operates within cofactor biosynthesis; adenosylcobalamin biosynthesis; adenosylcobalamin from cob(II)yrinate a,c-diamide: step 7/7. Joins adenosylcobinamide-GDP and alpha-ribazole to generate adenosylcobalamin (Ado-cobalamin). Also synthesizes adenosylcobalamin 5'-phosphate from adenosylcobinamide-GDP and alpha-ribazole 5'-phosphate. In Brucella ovis (strain ATCC 25840 / 63/290 / NCTC 10512), this protein is Adenosylcobinamide-GDP ribazoletransferase.